Here is a 274-residue protein sequence, read N- to C-terminus: 2,3,4,5-tetrahydropyridine-2,6-dicarboxylate N-succinyltransferase (274 aa).

Substrate is bound by residues R104 and D141.

This sequence belongs to the transferase hexapeptide repeat family. As to quaternary structure, homotrimer.

The protein resides in the cytoplasm. The enzyme catalyses (S)-2,3,4,5-tetrahydrodipicolinate + succinyl-CoA + H2O = (S)-2-succinylamino-6-oxoheptanedioate + CoA. It functions in the pathway amino-acid biosynthesis; L-lysine biosynthesis via DAP pathway; LL-2,6-diaminopimelate from (S)-tetrahydrodipicolinate (succinylase route): step 1/3. This chain is 2,3,4,5-tetrahydropyridine-2,6-dicarboxylate N-succinyltransferase, found in Shigella dysenteriae serotype 1 (strain Sd197).